We begin with the raw amino-acid sequence, 252 residues long: Trans-aconitate 2-methyltransferase (252 aa).

The protein belongs to the methyltransferase superfamily. Tam family.

It is found in the cytoplasm. The enzyme catalyses trans-aconitate + S-adenosyl-L-methionine = (E)-3-(methoxycarbonyl)pent-2-enedioate + S-adenosyl-L-homocysteine. In terms of biological role, catalyzes the S-adenosylmethionine monomethyl esterification of trans-aconitate. This chain is Trans-aconitate 2-methyltransferase, found in Escherichia coli (strain 55989 / EAEC).